A 169-amino-acid polypeptide reads, in one-letter code: NAD(P)H-quinone oxidoreductase subunit J, chloroplastic (169 aa).

This sequence belongs to the complex I 30 kDa subunit family. As to quaternary structure, NDH is composed of at least 16 different subunits, 5 of which are encoded in the nucleus.

It localises to the plastid. It is found in the chloroplast thylakoid membrane. It catalyses the reaction a plastoquinone + NADH + (n+1) H(+)(in) = a plastoquinol + NAD(+) + n H(+)(out). The enzyme catalyses a plastoquinone + NADPH + (n+1) H(+)(in) = a plastoquinol + NADP(+) + n H(+)(out). Its function is as follows. NDH shuttles electrons from NAD(P)H:plastoquinone, via FMN and iron-sulfur (Fe-S) centers, to quinones in the photosynthetic chain and possibly in a chloroplast respiratory chain. The immediate electron acceptor for the enzyme in this species is believed to be plastoquinone. Couples the redox reaction to proton translocation, and thus conserves the redox energy in a proton gradient. This is NAD(P)H-quinone oxidoreductase subunit J, chloroplastic from Staurastrum punctulatum (Green alga).